A 342-amino-acid polypeptide reads, in one-letter code: S-adenosylmethionine:tRNA ribosyltransferase-isomerase (342 aa).

Belongs to the QueA family. As to quaternary structure, monomer.

It localises to the cytoplasm. It carries out the reaction 7-aminomethyl-7-carbaguanosine(34) in tRNA + S-adenosyl-L-methionine = epoxyqueuosine(34) in tRNA + adenine + L-methionine + 2 H(+). It functions in the pathway tRNA modification; tRNA-queuosine biosynthesis. Functionally, transfers and isomerizes the ribose moiety from AdoMet to the 7-aminomethyl group of 7-deazaguanine (preQ1-tRNA) to give epoxyqueuosine (oQ-tRNA). The polypeptide is S-adenosylmethionine:tRNA ribosyltransferase-isomerase (Geobacillus sp. (strain WCH70)).